We begin with the raw amino-acid sequence, 347 residues long: MSVMFDPQAAIYPFPPKPTPLNDDEKQFYREKIKRLLKERNAVMVAHYYTDPEIQQLAEETGGCISDSLEMARFGTKHAASTLLVAGVRFMGETAKILSPEKTILMPTLAAECSLDLGCPIDEFSAFCDAHPDRTVVVYANTSAAVKARADWVVTSSIAVELIEHLDSLGEKIIWAPDRHLGNYVQKQTGADVLCWQGACIVHDEFKTQALTRLKKIYPDAALLVHPESPQSIVEMADAVGSTSQLIKAAKTLPHRQLIVATDRGIFYKMQQAVPEKELLEAPTAGEGATCRSCAHCPWMAMNGLKAIAEGLEQGGAAHEIQVDAALREGALLPLNRMLDFAATLRA.

Residues histidine 47 and serine 68 each contribute to the iminosuccinate site. Residue cysteine 113 participates in [4Fe-4S] cluster binding. Iminosuccinate is bound by residues 139 to 141 (YAN) and serine 156. Cysteine 200 is a [4Fe-4S] cluster binding site. Iminosuccinate is bound by residues 226–228 (HPE) and threonine 243. Cysteine 297 provides a ligand contact to [4Fe-4S] cluster.

This sequence belongs to the quinolinate synthase family. Type 1 subfamily. [4Fe-4S] cluster serves as cofactor.

It localises to the cytoplasm. It catalyses the reaction iminosuccinate + dihydroxyacetone phosphate = quinolinate + phosphate + 2 H2O + H(+). It functions in the pathway cofactor biosynthesis; NAD(+) biosynthesis; quinolinate from iminoaspartate: step 1/1. Functionally, catalyzes the condensation of iminoaspartate with dihydroxyacetone phosphate to form quinolinate. The polypeptide is Quinolinate synthase (Salmonella heidelberg (strain SL476)).